Consider the following 223-residue polypeptide: Protein FAM3D (223 aa).

An N-terminal signal peptide occupies residues 1-25 (MRVAGLIRVVVFIFTIVTMWVFLRS). Disulfide bonds link C54–C82 and C60–C217. In terms of domain architecture, GG-type lectin spans 62–221 (NNFFAFKISS…LELEGCVPRK (160 aa)). N-linked (GlcNAc...) asparagine glycosylation occurs at N106.

Belongs to the FAM3 family.

The protein localises to the secreted. The sequence is that of Protein FAM3D from Mus musculus (Mouse).